A 286-amino-acid polypeptide reads, in one-letter code: Translocon-associated protein subunit alpha (286 aa).

Residues 1 to 20 (MSSLRRLLLLLLLVFPATLL) form the signal peptide. Topologically, residues 21 to 207 (LRVGPGGSLA…EREDGLDGET (187 aa)) are lumenal. Acidic residues predominate over residues 37–75 (EDEETVEDSIIEDEDDEAEVEEDEPTDLAEDKEEDDVSG). Positions 37-83 (EDEETVEDSIIEDEDDEAEVEEDEPTDLAEDKEEDDVSGEPEASPSA) are disordered. N-linked (GlcNAc...) asparagine glycosylation is found at N136 and N191. Residues 208–228 (IFMYMFLAGLGLLVVVGLHQL) traverse the membrane as a helical segment. Residues 229–286 (LESRKRKRPIQKVEMGTSSQNDVDMSWIPQETLNQINKASPRRLPRKRAQKRSVGSDE) lie on the Cytoplasmic side of the membrane. The residue at position 247 (S247) is a Phosphoserine. Phosphothreonine is present on T260. The tract at residues 261 to 286 (LNQINKASPRRLPRKRAQKRSVGSDE) is disordered. S268 carries the phosphoserine modification. Residues 268–279 (SPRRLPRKRAQK) show a composition bias toward basic residues.

Belongs to the TRAP-alpha family. In terms of assembly, heterotetramer of TRAP-alpha, TRAP-beta, TRAP-delta and TRAP-gamma. Interacts with palmitoylated calnexin (CALX), the interaction is required for efficient folding of glycosylated proteins. In terms of processing, phosphorylated in its cytoplasmic tail.

It localises to the endoplasmic reticulum membrane. Functionally, TRAP proteins are part of a complex whose function is to bind calcium to the ER membrane and thereby regulate the retention of ER resident proteins. May be involved in the recycling of the translocation apparatus after completion of the translocation process or may function as a membrane-bound chaperone facilitating folding of translocated proteins. The protein is Translocon-associated protein subunit alpha (SSR1) of Bos taurus (Bovine).